The primary structure comprises 241 residues: Large ribosomal subunit protein uL3 (241 aa).

The tract at residues 140–168 (SHRSIGSTGGRQDPGKTFKNKKMPGHMGD) is disordered. N5-methylglutamine is present on Gln151.

Belongs to the universal ribosomal protein uL3 family. Part of the 50S ribosomal subunit. Forms a cluster with proteins L14 and L19. Post-translationally, methylated by PrmB.

In terms of biological role, one of the primary rRNA binding proteins, it binds directly near the 3'-end of the 23S rRNA, where it nucleates assembly of the 50S subunit. In Azorhizobium caulinodans (strain ATCC 43989 / DSM 5975 / JCM 20966 / LMG 6465 / NBRC 14845 / NCIMB 13405 / ORS 571), this protein is Large ribosomal subunit protein uL3.